A 106-amino-acid polypeptide reads, in one-letter code: Urease subunit beta (106 aa).

Belongs to the urease beta subunit family. Heterotrimer of UreA (gamma), UreB (beta) and UreC (alpha) subunits. Three heterotrimers associate to form the active enzyme.

Its subcellular location is the cytoplasm. It carries out the reaction urea + 2 H2O + H(+) = hydrogencarbonate + 2 NH4(+). It participates in nitrogen metabolism; urea degradation; CO(2) and NH(3) from urea (urease route): step 1/1. This chain is Urease subunit beta, found in Synechococcus sp. (strain CC9311).